A 517-amino-acid polypeptide reads, in one-letter code: Phenol 2-monooxygenase, oxygenase component DmpN (517 aa).

Residues Glu-109, Glu-139, His-142, Glu-200, Glu-234, and His-237 each contribute to the Fe cation site.

Belongs to the TmoA/XamoA family. The multicomponent enzyme phenol hydroxylase is formed by DmpL (P1 component), DmpM (P2 component), DmpN (P3 component), DmpO (P4 component) and DmpP (P5 component). The oxygenase component is a dimer composed of three subunits, DmpL, DmpN and DmpO (DmpLNO). DmpN interacts with the auxiliary protein DmpK (P0 component). The cofactor is Fe(2+).

The catalysed reaction is phenol + NADH + O2 + H(+) = catechol + NAD(+) + H2O. It functions in the pathway aromatic compound metabolism; phenol degradation. Its activity is regulated as follows. Requires DmpM for efficient turnover. The activity of DmpLNO oxygenase is inhibited by dithiothreitol (DTT) by a mechanism apparently involving H(2)O(2) generation. Functionally, part of a multicomponent enzyme which catalyzes the degradation of phenol and some of its methylated derivatives. DmpL, DmpN and DmpO form the oxygenase component of the complex. Required for growth on phenol and for in vitro phenol hydroxylase activity. This is Phenol 2-monooxygenase, oxygenase component DmpN from Pseudomonas sp. (strain CF600).